Here is a 303-residue protein sequence, read N- to C-terminus: Probable alpha-L-glutamate ligase 1 (303 aa).

The 184-residue stretch at 104–287 (LQLLSRKGVG…IAGLIYSFIE (184 aa)) folds into the ATP-grasp domain. ATP contacts are provided by residues K141, 178–179 (EF), D187, and 211–213 (RSN). Mg(2+) contacts are provided by D248, E260, and N262. Mn(2+)-binding residues include D248, E260, and N262.

It belongs to the RimK family. The cofactor is Mg(2+). It depends on Mn(2+) as a cofactor.

The chain is Probable alpha-L-glutamate ligase 1 from Hahella chejuensis (strain KCTC 2396).